A 398-amino-acid chain; its full sequence is Phosphoglycerate kinase (398 aa).

Residues 21–23 (DFN), R36, 59–62 (HFGR), R117, and R150 contribute to the substrate site. ATP is bound by residues K200, E321, and 351-354 (GGDS).

It belongs to the phosphoglycerate kinase family. In terms of assembly, monomer.

The protein localises to the cytoplasm. The catalysed reaction is (2R)-3-phosphoglycerate + ATP = (2R)-3-phospho-glyceroyl phosphate + ADP. It participates in carbohydrate degradation; glycolysis; pyruvate from D-glyceraldehyde 3-phosphate: step 2/5. This is Phosphoglycerate kinase from Wolbachia sp. subsp. Drosophila simulans (strain wRi).